We begin with the raw amino-acid sequence, 213 residues long: 3-isopropylmalate dehydratase small subunit (213 aa).

It belongs to the LeuD family. LeuD type 1 subfamily. As to quaternary structure, heterodimer of LeuC and LeuD.

It carries out the reaction (2R,3S)-3-isopropylmalate = (2S)-2-isopropylmalate. The protein operates within amino-acid biosynthesis; L-leucine biosynthesis; L-leucine from 3-methyl-2-oxobutanoate: step 2/4. Catalyzes the isomerization between 2-isopropylmalate and 3-isopropylmalate, via the formation of 2-isopropylmaleate. This Pseudomonas syringae pv. syringae (strain B728a) protein is 3-isopropylmalate dehydratase small subunit.